The primary structure comprises 595 residues: MGKKSRVKTQKSGTGATATVSPKEILNLTSELLQKCSSPAPGPGKEWEEYVQIRSLVEKIRKKQKGLSITFDGKRENYFPDLMKWASENGASVEGFEMVNFKEEGFGLRATRDIKAEELFLWVPRKLLMTVESAKNSVLGPLYSQDRILQAMGNIALAFHLLCERASPNSFWQPYIQSLPSEYDTPLYFEEDEVRYLQSTQAIHDVFSQYKNTARQYAYFYKVIQTHPHANKLPLKDSFTYEDYRWAVSSVMTRQNQIPTEDGSRVTLALIPLWDMCNHTNGLITTGYNLEDDRCECVALQDFRAGEQIYIFYGTRSNAEFVIHSGFFFDNNSHDRVKIKLGVSKSDRLYAMKAEVLARAGIPTSSVFALHFTEPPISAQLLAFLRVFCMTEEELKEHLLGDNAIDRIFTLGNSEFPVSWDNEVKLWTFLEDRASLLLKTYKTTIEEDKFVLKNHDLSVRATMAIKLRLGEKEILEKAVKSAAVNREYYRKQMEEKAPLPKYEESNLGLLESSVGDSRLPLVLRNLEEEAGVQEALNIKEAISKAEATENGLVNGENCIPNGTRSENEDLNQEENKRAVEDAKGSSSDSTDAVKK.

The tract at residues 1–22 is disordered; the sequence is MGKKSRVKTQKSGTGATATVSP. The segment covering 10-20 has biased composition (polar residues); that stretch reads QKSGTGATATV. S-adenosyl-L-methionine contacts are provided by residues Arg-75, 104 to 106, Arg-254, 275 to 279, and 325 to 327; these read EGF, DMCNH, and SGF. The 221-residue stretch at 94–314 folds into the SET domain; the sequence is EGFEMVNFKE…AGEQIYIFYG (221 aa). Ser-513 bears the Phosphoserine mark. The disordered stretch occupies residues 552-595; that stretch reads LVNGENCIPNGTRSENEDLNQEENKRAVEDAKGSSSDSTDAVKK. Residues 573 to 583 show a composition bias toward basic and acidic residues; it reads EENKRAVEDAK. Residues 584–595 show a composition bias toward polar residues; the sequence is GSSSDSTDAVKK.

It belongs to the class V-like SAM-binding methyltransferase superfamily. SETD3 actin-histidine methyltransferase family. As to quaternary structure, interacts with MYOD1. In terms of processing, phosphorylated by GSK3B, which is required for recognition by the SCF(FBXW7) complex and subsequent degradation. Ubiquitinated by the SCF(FBXW7) complex following phosphorylation by GSK3B, leading to its degradation by the proteasome.

The protein resides in the cytoplasm. Its subcellular location is the nucleus. The catalysed reaction is L-histidyl-[protein] + S-adenosyl-L-methionine = N(tele)-methyl-L-histidyl-[protein] + S-adenosyl-L-homocysteine + H(+). Functionally, protein-histidine N-methyltransferase that specifically mediates 3-methylhistidine (tele-methylhistidine) methylation of actin at 'His-73'. Histidine methylation of actin is required for smooth muscle contraction of the laboring uterus during delivery. Does not have protein-lysine N-methyltransferase activity and probably only catalyzes histidine methylation of actin. This chain is Actin-histidine N-methyltransferase, found in Otolemur garnettii (Small-eared galago).